The following is a 268-amino-acid chain: Tryptophan synthase alpha chain (268 aa).

Catalysis depends on proton acceptor residues glutamate 49 and aspartate 60.

It belongs to the TrpA family. In terms of assembly, tetramer of two alpha and two beta chains.

The catalysed reaction is (1S,2R)-1-C-(indol-3-yl)glycerol 3-phosphate + L-serine = D-glyceraldehyde 3-phosphate + L-tryptophan + H2O. The protein operates within amino-acid biosynthesis; L-tryptophan biosynthesis; L-tryptophan from chorismate: step 5/5. Its function is as follows. The alpha subunit is responsible for the aldol cleavage of indoleglycerol phosphate to indole and glyceraldehyde 3-phosphate. The chain is Tryptophan synthase alpha chain from Yersinia pseudotuberculosis serotype O:1b (strain IP 31758).